A 125-amino-acid polypeptide reads, in one-letter code: Large ribosomal subunit protein bL17 (125 aa).

Belongs to the bacterial ribosomal protein bL17 family. Part of the 50S ribosomal subunit. Contacts protein L32.

In Acinetobacter baumannii (strain AB307-0294), this protein is Large ribosomal subunit protein bL17.